A 348-amino-acid polypeptide reads, in one-letter code: Hereditary hemochromatosis protein (348 aa).

An N-terminal signal peptide occupies residues 1–22; that stretch reads MGPRARPALLLLMLLQTAVLQG. Positions 23 to 114 are alpha-1; that stretch reads RLLRSHSLHY…IMENHNHSKE (92 aa). Over 23–306 the chain is Extracellular; it reads RLLRSHSLHY…WEPSPSGTLV (284 aa). 3 N-linked (GlcNAc...) asparagine glycosylation sites follow: N110, N130, and N234. The interval 115–205 is alpha-2; that stretch reads SHTLQVILGC…ELGRGVLDQQ (91 aa). Intrachain disulfides connect C124–C187 and C225–C282. Residues 206-297 are alpha-3; sequence VPPLVKVTHH…GLDQPLIVIW (92 aa). One can recognise an Ig-like C1-type domain in the interval 207 to 298; the sequence is PPLVKVTHHV…LDQPLIVIWE (92 aa). The tract at residues 298-306 is connecting peptide; sequence EPSPSGTLV. Residues 307–330 form a helical membrane-spanning segment; it reads IGVISGIAVFVVILFIGILFIILR. The Cytoplasmic portion of the chain corresponds to 331 to 348; that stretch reads KRQGSRGAMGHYVLAERE.

This sequence belongs to the MHC class I family. In terms of assembly, binds TFR through the extracellular domain in a pH-dependent manner. Expressed in all tissues tested except brain.

It localises to the cell membrane. Functionally, binds to transferrin receptor (TFR) and reduces its affinity for iron-loaded transferrin. This is Hereditary hemochromatosis protein (HFE) from Homo sapiens (Human).